Here is a 65-residue protein sequence, read N- to C-terminus: Small ribosomal subunit protein bS21B (65 aa).

This sequence belongs to the bacterial ribosomal protein bS21 family.

This chain is Small ribosomal subunit protein bS21B, found in Geobacter sulfurreducens (strain ATCC 51573 / DSM 12127 / PCA).